A 375-amino-acid polypeptide reads, in one-letter code: INO80 complex subunit B (375 aa).

Positions 1-84 (MSACVPTVSS…GPTLQTPAKP (84 aa)) are disordered. The span at 50 to 68 (HGVHKKKHKKHKKKHKKKH) shows a compositional bias: basic residues. A phosphoserine mark is found at Ser-114, Ser-116, Ser-144, Ser-147, and Ser-149. Disordered regions lie at residues 143–165 (DSNL…EEEE), 201–220 (LQKA…GGGC), 262–287 (TAAP…AAPA), and 312–331 (PTAV…CSVP). A coiled-coil region spans residues 230 to 262 (LLKREERARKRRLQAARRAEEHKNQTIERLTKT). Residues 324–355 (PAPRCSVPGCPHPRRYACSRTGQALCSLQCYR) form an HIT-type zinc finger.

In terms of assembly, component of the chromatin remodeling INO80 complex; specifically part of a complex module associated with the helicase ATP-binding and the helicase C-terminal domain of INO80. Interacts with RP9. As to expression, expressed strongly in the testis and moderately in the kidney, skeletal muscle, liver and lung.

It localises to the nucleus. The protein localises to the nucleolus. Functionally, proposed core component of the chromatin remodeling INO80 complex which is involved in transcriptional regulation, DNA replication and probably DNA repair. The chain is INO80 complex subunit B (Ino80b) from Mus musculus (Mouse).